A 205-amino-acid chain; its full sequence is ATP-dependent Clp protease proteolytic subunit (205 aa).

Catalysis depends on serine 107, which acts as the Nucleophile. The active site involves histidine 132.

The protein belongs to the peptidase S14 family. Fourteen ClpP subunits assemble into 2 heptameric rings which stack back to back to give a disk-like structure with a central cavity, resembling the structure of eukaryotic proteasomes.

Its subcellular location is the cytoplasm. It catalyses the reaction Hydrolysis of proteins to small peptides in the presence of ATP and magnesium. alpha-casein is the usual test substrate. In the absence of ATP, only oligopeptides shorter than five residues are hydrolyzed (such as succinyl-Leu-Tyr-|-NHMec, and Leu-Tyr-Leu-|-Tyr-Trp, in which cleavage of the -Tyr-|-Leu- and -Tyr-|-Trp bonds also occurs).. Cleaves peptides in various proteins in a process that requires ATP hydrolysis. Has a chymotrypsin-like activity. Plays a major role in the degradation of misfolded proteins. The chain is ATP-dependent Clp protease proteolytic subunit from Pseudoalteromonas translucida (strain TAC 125).